A 281-amino-acid chain; its full sequence is Clc-like protein 5 (281 aa).

4 consecutive transmembrane segments (helical) span residues 13-33 (LATL…TITP), 104-124 (VLIL…AVIF), 137-157 (IMLD…LIVF), and 184-204 (YYLA…AALV).

This sequence belongs to the Clc family.

It is found in the membrane. This chain is Clc-like protein 5 (clc-5), found in Caenorhabditis elegans.